The following is a 649-amino-acid chain: Lysophospholipase (649 aa).

The first 21 residues, 1–21 (MNLKEWLLFSDAVFFAQGTLA), serve as a signal peptide directing secretion. Residues N32, N51, N77, N90, N121, N158, N168, N213, N275, N343, N386, N457, N487, N511, N539, N563, and N580 are each glycosylated (N-linked (GlcNAc...) asparagine). The region spanning 34–584 (SCDEDINLIR…TNYCWNGTID (551 aa)) is the PLA2c domain.

It belongs to the lysophospholipase family.

The protein resides in the secreted. The enzyme catalyses a 1-acyl-sn-glycero-3-phosphocholine + H2O = sn-glycerol 3-phosphocholine + a fatty acid + H(+). Its function is as follows. Catalyzes the release of fatty acids from lysophospholipids. In Torulaspora delbrueckii (Yeast), this protein is Lysophospholipase.